Reading from the N-terminus, the 330-residue chain is GMP reductase (330 aa).

The Thioimidate intermediate role is filled by Cys180. Residue 209–232 (LIADGGIRHNGDIAKSVRFGASMV) coordinates NADP(+).

The protein belongs to the IMPDH/GMPR family. GuaC type 2 subfamily.

The enzyme catalyses IMP + NH4(+) + NADP(+) = GMP + NADPH + 2 H(+). Catalyzes the irreversible NADPH-dependent deamination of GMP to IMP. It functions in the conversion of nucleobase, nucleoside and nucleotide derivatives of G to A nucleotides, and in maintaining the intracellular balance of A and G nucleotides. In Lactobacillus delbrueckii subsp. bulgaricus (strain ATCC BAA-365 / Lb-18), this protein is GMP reductase.